The sequence spans 158 residues: NAD(P)H-quinone oxidoreductase subunit J, chloroplastic (158 aa).

Belongs to the complex I 30 kDa subunit family. NDH is composed of at least 16 different subunits, 5 of which are encoded in the nucleus.

The protein localises to the plastid. Its subcellular location is the chloroplast thylakoid membrane. The enzyme catalyses a plastoquinone + NADH + (n+1) H(+)(in) = a plastoquinol + NAD(+) + n H(+)(out). It catalyses the reaction a plastoquinone + NADPH + (n+1) H(+)(in) = a plastoquinol + NADP(+) + n H(+)(out). In terms of biological role, NDH shuttles electrons from NAD(P)H:plastoquinone, via FMN and iron-sulfur (Fe-S) centers, to quinones in the photosynthetic chain and possibly in a chloroplast respiratory chain. The immediate electron acceptor for the enzyme in this species is believed to be plastoquinone. Couples the redox reaction to proton translocation, and thus conserves the redox energy in a proton gradient. The chain is NAD(P)H-quinone oxidoreductase subunit J, chloroplastic from Capsella bursa-pastoris (Shepherd's purse).